The sequence spans 211 residues: Uracil phosphoribosyltransferase (211 aa).

5-phospho-alpha-D-ribose 1-diphosphate-binding positions include Arg78, Arg103, and 130–138 (DPMLATGGT). Uracil contacts are provided by residues Ile196 and 201–203 (GDA). Asp202 provides a ligand contact to 5-phospho-alpha-D-ribose 1-diphosphate.

The protein belongs to the UPRTase family. Mg(2+) serves as cofactor.

The catalysed reaction is UMP + diphosphate = 5-phospho-alpha-D-ribose 1-diphosphate + uracil. Its pathway is pyrimidine metabolism; UMP biosynthesis via salvage pathway; UMP from uracil: step 1/1. Allosterically activated by GTP. In terms of biological role, catalyzes the conversion of uracil and 5-phospho-alpha-D-ribose 1-diphosphate (PRPP) to UMP and diphosphate. The protein is Uracil phosphoribosyltransferase of Kineococcus radiotolerans (strain ATCC BAA-149 / DSM 14245 / SRS30216).